Consider the following 905-residue polypeptide: Probable coatomer subunit gamma (905 aa).

HEAT repeat units lie at residues 265–302, 303–340, 374–412, 414–450, and 525–563; these read TQFRDQMVPFLHGWLKSKGDMVNLEVARNMVRLKNISD, DDLQPVVSVLKIFLSSHRSATRFSAIRTLNELAMTRPH, DESVDRLMKQIVTFMSDISDNFKIIVVDAIRSLCLKFPR, QDSMLTFLSNILCDEGGYEFKRAAVDAISDMIKYIPE, and KFVQRSVKVILTRCLEDADDEVRDRAAFSVKALEDRDAF. The residue at position 604 (S604) is a Phosphoserine.

The protein belongs to the COPG family. Oligomeric complex that consists of at least the alpha, beta, beta', gamma, delta, epsilon and zeta subunits.

Its subcellular location is the cytoplasm. It localises to the golgi apparatus membrane. It is found in the cytoplasmic vesicle. The protein localises to the COPI-coated vesicle membrane. In terms of biological role, the coatomer is a cytosolic protein complex that binds to dilysine motifs and reversibly associates with Golgi non-clathrin-coated vesicles, which further mediate biosynthetic protein transport from the ER, via the Golgi up to the trans Golgi network. Coatomer complex is required for budding from Golgi membranes, and is essential for the retrograde Golgi-to-ER transport of dilysine-tagged proteins. This Schizosaccharomyces pombe (strain 972 / ATCC 24843) (Fission yeast) protein is Probable coatomer subunit gamma (sec21).